Reading from the N-terminus, the 743-residue chain is MDQKLSELVEVLTTSGEPQLNPEKLKELKKICRSSDEHINHVYHLLMTQLNQEHAEIRLSAFQIVTELFARSHLFRTLLISNFQEFLELTVETDHEQPLPPPKEVAQKMKILAIKTVQEWHEKFGEAYKKLSLGYHFLKQNKKIDFQDVRSRTQAERKREEEKQRRLENIYKEKVKKATAEMEDMLEEIQSSLTEMENCFRLLLPDPREFAVFTDEKDFASDMRTKPTSQSPSHSKSTSQSSAYSKSTSQVSFDNDDEQPCCSKNLPPFPSSCTSSASGAERSLGEGAKESDKSARKSDTDDSDGDYEGSREAFLRDHGLGSHAYSLSLEISTDLKVNENENNTDVLNNLMDAHKLLKQKYWPAVQSWIQLFTKAGTNSESLKCAIDVKKEIEAALKKYKEMNIDCHTKERKVMTASDDDDDDDEFEEVPEKEGYEPHIPDHLREEYGLEPSASKQPGKKTEVKRPNVPQVPPSQKRINDELNPTCAAATMKTMKDKMAKALPGSSRNAGEPKSKCPKRETDLSQAPVAPCGLDLHHWGEEQPSAGKMLKFSSLHRFWAPNEVDEEVESKELEALVKTRYVTLPGKFEPVKHKCLAPMPNGSLCERQDRYKCPFHGKIVPRDAIGVPINAEDRAREAREKFEKQGEEQDWRDPELMREIEQATGVDLGSSKCPVKGKGKGVKRNLKKKYPNLTDLKQKANTSRSRLEKKVFNTGSVKRVISAMNQADKRRHEKFANQFNYALN.

Residues 2 to 145 are VHS-like; sequence DQKLSELVEV…HFLKQNKKID (144 aa). Residues 147 to 199 adopt a coiled-coil conformation; it reads QDVRSRTQAERKREEEKQRRLENIYKEKVKKATAEMEDMLEEIQSSLTEMENC. The segment at 221 to 310 is disordered; sequence SDMRTKPTSQ…DDSDGDYEGS (90 aa). Over residues 226–252 the composition is skewed to low complexity; that stretch reads KPTSQSPSHSKSTSQSSAYSKSTSQVS. Residues 283–300 are compositionally biased toward basic and acidic residues; that stretch reads SLGEGAKESDKSARKSDT. Residues 380–411 adopt a coiled-coil conformation; the sequence is ESLKCAIDVKKEIEAALKKYKEMNIDCHTKER. Disordered stretches follow at residues 413 to 482 and 500 to 525; these read VMTA…NDEL and KALP…DLSQ. Residues 417 to 428 show a composition bias toward acidic residues; it reads SDDDDDDDEFEE. Basic and acidic residues-rich tracts occupy residues 429–447 and 510–522; these read VPEK…REEY and GEPK…RETD. Lysine 432 is covalently cross-linked (Glycyl lysine isopeptide (Lys-Gly) (interchain with G-Cter in ubiquitin)). The segment at 591-618 adopts a UVSSA-type zinc-finger fold; the sequence is KHKCLAPMPNGSLCERQDRYKCPFHGKI. Zn(2+) contacts are provided by cysteine 594, cysteine 604, cysteine 612, and histidine 615.

It belongs to the UVSSA family. Post-translationally, monoubiquitinated at Lys-432 in response to transcription stress; this promotes efficient transfer of TFIIH to stalled RNA polymerase II.

The protein localises to the chromosome. Its function is as follows. Factor involved in transcription-coupled nucleotide excision repair (TC-NER), a mechanism that rapidly removes RNA polymerase II-blocking lesions from the transcribed strand of active genes. Acts as a key adapter that promotes recruitment of factors involved in TC-NER. Facilitates the ubiquitination of the elongating form of RNA polymerase II (RNA pol IIo) at DNA damage sites, thereby promoting RNA pol IIo backtracking and access by the TC-NER machinery to lesion sites. Also promotes stabilization of ERCC6/CSB by recruiting deubiquitinating enzyme USP7 to TC-NER complexes, preventing UV-induced degradation of ERCC6 by the proteasome. Mediates the recruitment of the TFIIH complex and other factors that are required for nucleotide excision repair to RNA polymerase II. Also required to inactivate stalled RNA polymerase II by blocking the access of TCEA1/TFIIS, thereby preventing reactivation of RNA polymerase II. In Xenopus tropicalis (Western clawed frog), this protein is UV-stimulated scaffold protein A (uvssa).